The following is a 242-amino-acid chain: Outer membrane protein class 4 (242 aa).

The first 22 residues, 1-22, serve as a signal peptide directing secretion; sequence MTKQLKLSALFVALLASGTAVA. A run of 7 repeats spans residues 69-70, 71-72, 73-74, 75-76, 77-78, 79-80, and 81-82. The segment at 69–82 is 7 X 2 AA tandem repeats of X-P; it reads APEPEPEPEPAPAP. Positions 92–229 constitute an OmpA-like domain; sequence YVDETISLSA…RVDVKIRSIV (138 aa). The cysteines at positions 191 and 214 are disulfide-linked.

The protein belongs to the outer membrane OOP (TC 1.B.6) superfamily.

The protein resides in the cell outer membrane. In Neisseria meningitidis serogroup A / serotype 4A (strain DSM 15465 / Z2491), this protein is Outer membrane protein class 4 (rmpM).